The chain runs to 292 residues: Ventral anterior homeobox 2 (292 aa).

The segment covering 1–36 (MGDGGAERDRGPKRREEPGGRSGRHGEHRGAEDLRA) has biased composition (basic and acidic residues). A disordered region spans residues 1–74 (MGDGGAERDR…DGQQALGETD (74 aa)). The homeobox DNA-binding region spans 102-161 (PKRTRTSFTAEQLYRLEMEFQRCQYVVGRERTELARQLNLSETQVKVWFQNRRTKQKKDQ). The disordered stretch occupies residues 207-242 (LPGLPASHRGTSLVDPRNSSPRLNPMPSASASSPLP).

Belongs to the EMX homeobox family. As to expression, expressed in the developing and mature retina.

Its subcellular location is the nucleus. Its function is as follows. Transcription factor that may function in dorsoventral specification of the forebrain. Regulates the expression of Wnt signaling antagonists including the expression of a truncated TCF7L2 isoform that cannot bind CTNNB1 and acts therefore as a potent dominant-negative Wnt antagonist. Plays a crucial role in eye development and, in particular, in the specification of the ventral optic vesicle. May be a regulator of axial polarization in the retina. The protein is Ventral anterior homeobox 2 (Vax2) of Mus musculus (Mouse).